The chain runs to 346 residues: Methylthioribose-1-phosphate isomerase (346 aa).

Substrate is bound by residues 46 to 48 (RGA), Arg89, and Gln196. The active-site Proton donor is the Asp237. 247–248 (NK) contacts substrate.

The protein belongs to the eIF-2B alpha/beta/delta subunits family. MtnA subfamily.

The catalysed reaction is 5-(methylsulfanyl)-alpha-D-ribose 1-phosphate = 5-(methylsulfanyl)-D-ribulose 1-phosphate. Its pathway is amino-acid biosynthesis; L-methionine biosynthesis via salvage pathway; L-methionine from S-methyl-5-thio-alpha-D-ribose 1-phosphate: step 1/6. Its function is as follows. Catalyzes the interconversion of methylthioribose-1-phosphate (MTR-1-P) into methylthioribulose-1-phosphate (MTRu-1-P). The chain is Methylthioribose-1-phosphate isomerase from Citrifermentans bemidjiense (strain ATCC BAA-1014 / DSM 16622 / JCM 12645 / Bem) (Geobacter bemidjiensis).